The chain runs to 239 residues: MVGLTTLFWLGAIGMLVGTLAFAWAGRDAGSGERRYYVTLVGISGIAAVAYVVMALGVGWVPVAERTVFAPRYIDWILTTPLIVYFLGLLAGLDSREFGIVITLNTVVMLAGFAGAMVPGIERYALFGMGAVAFLGLVYYLVGPMTESASQRSSGIKSLYVRLRNLTVILWAIYPFIWLLGPPGVALLTPTVDVALIVYLDLVTKVGFGFIALDAAATLRAEHGESLAGVDTDAPAVAD.

Residues 1 to 3 (MVG) lie on the Extracellular side of the membrane. Residues 4 to 25 (LTTLFWLGAIGMLVGTLAFAWA) form a helical membrane-spanning segment. The Cytoplasmic portion of the chain corresponds to 26–33 (GRDAGSGE). Residues 34–55 (RRYYVTLVGISGIAAVAYVVMA) form a helical membrane-spanning segment. At 56 to 69 (LGVGWVPVAERTVF) the chain is on the extracellular side. The chain crosses the membrane as a helical span at residues 70-91 (APRYIDWILTTPLIVYFLGLLA). Topologically, residues 92 to 94 (GLD) are cytoplasmic. A helical membrane pass occupies residues 95 to 117 (SREFGIVITLNTVVMLAGFAGAM). Over 118-121 (VPGI) the chain is Extracellular. Residues 122 to 149 (ERYALFGMGAVAFLGLVYYLVGPMTESA) form a helical membrane-spanning segment. The Cytoplasmic segment spans residues 150–153 (SQRS). The helical transmembrane segment at 154–181 (SGIKSLYVRLRNLTVILWAIYPFIWLLG) threads the bilayer. The Extracellular segment spans residues 182–189 (PPGVALLT). A helical membrane pass occupies residues 190–222 (PTVDVALIVYLDLVTKVGFGFIALDAAATLRAE). Lysine 205 bears the N6-(retinylidene)lysine mark. Topologically, residues 223 to 239 (HGESLAGVDTDAPAVAD) are cytoplasmic.

The protein belongs to the archaeal/bacterial/fungal opsin family. In terms of assembly, homodimer. Interacts with HTR-II.

It localises to the cell membrane. Photophobic photoreceptor responsible for the negative phototaxis. Activates the sensory rhodopsin II transducer (HTR-II) in response to blue light. The protein is Sensory rhodopsin-2 (sop2) of Natronomonas pharaonis (Natronobacterium pharaonis).